A 184-amino-acid polypeptide reads, in one-letter code: Isopentenyl-diphosphate Delta-isomerase (184 aa).

Mn(2+)-binding residues include His25 and His32. A Nudix hydrolase domain is found at 30-164 (PLHLAFSCWL…PWAFSPWMVL (135 aa)). Residue Cys67 is part of the active site. His69 lines the Mn(2+) pocket. Residue Glu87 participates in Mg(2+) binding. Residues Glu114 and Glu116 each coordinate Mn(2+). Glu116 is an active-site residue.

It belongs to the IPP isomerase type 1 family. As to quaternary structure, homodimer. Mg(2+) serves as cofactor. Requires Mn(2+) as cofactor.

It localises to the cytoplasm. It carries out the reaction isopentenyl diphosphate = dimethylallyl diphosphate. It functions in the pathway isoprenoid biosynthesis; dimethylallyl diphosphate biosynthesis; dimethylallyl diphosphate from isopentenyl diphosphate: step 1/1. Its function is as follows. Catalyzes the 1,3-allylic rearrangement of the homoallylic substrate isopentenyl (IPP) to its highly electrophilic allylic isomer, dimethylallyl diphosphate (DMAPP). This Klebsiella pneumoniae (strain 342) protein is Isopentenyl-diphosphate Delta-isomerase.